Reading from the N-terminus, the 190-residue chain is Lipid A acyltransferase PagP (190 aa).

An N-terminal signal peptide occupies residues 1-24 (MNRYLLTTLSAPLLALFFSFSLQA). Catalysis depends on residues His62, Asp105, and Ser106.

It belongs to the lipid A palmitoyltransferase family. As to quaternary structure, homodimer.

The protein resides in the cell outer membrane. It catalyses the reaction a lipid A + a 1,2-diacyl-sn-glycero-3-phosphocholine = a hepta-acyl lipid A + a 2-acyl-sn-glycero-3-phosphocholine. The enzyme catalyses a lipid IVA + a 1,2-diacyl-sn-glycero-3-phosphocholine = a lipid IVB + a 2-acyl-sn-glycero-3-phosphocholine. The catalysed reaction is a lipid IIA + a 1,2-diacyl-sn-glycero-3-phosphocholine = a lipid IIB + a 2-acyl-sn-glycero-3-phosphocholine. Its function is as follows. Transfers a fatty acid residue from the sn-1 position of a phospholipid to the N-linked hydroxyfatty acid chain on the proximal unit of lipid A or its precursors. The polypeptide is Lipid A acyltransferase PagP (Pantoea ananatis (strain LMG 20103)).